The following is a 125-amino-acid chain: Protein ApaG (125 aa).

The region spanning 1–125 (MINSPRVCVQ…FRLAIPSLIN (125 aa)) is the ApaG domain.

The chain is Protein ApaG from Sodalis glossinidius (strain morsitans).